The sequence spans 264 residues: tRNA pseudouridine synthase A (264 aa).

Catalysis depends on Asp51, which acts as the Nucleophile. Tyr109 is a binding site for substrate.

The protein belongs to the tRNA pseudouridine synthase TruA family. In terms of assembly, homodimer.

The catalysed reaction is uridine(38/39/40) in tRNA = pseudouridine(38/39/40) in tRNA. Formation of pseudouridine at positions 38, 39 and 40 in the anticodon stem and loop of transfer RNAs. The chain is tRNA pseudouridine synthase A from Pseudoalteromonas translucida (strain TAC 125).